Here is a 425-residue protein sequence, read N- to C-terminus: MPYATEETSSVAWFPEGNLCHSKTCGPRTNGIVLEAMKGKLSQPSEWDRSEPFCVMDLGYVYNEYQRWTSLLPDVKPFYAVKCNPDTHIIKVLNAMNSGFDCASRNEMELVMSQGVAPERIIFANPCKKISDLEYAQQSGVRKMTFDNEAELQKIRQRFPDAQLILRCLASDPSATYSLGSKFGASSATSVKLLQCAKSWGLSVVGVSFHIGSNAKDPTAFDKAIQNSREVFDAGLRTGHDMHLLDIGGGFSAHNFDAMASSIRQCIGKYFCGIDVEIVAEPGRYFAAGALTLACGIIGRRDAAANDEDKENRHMLYLNDGVYGTFICNIFEPGPQPKVLRASGDFYPLDSEDEYERYTIWGPTCDGTDCVAESVALPKSLAIDDWLYFPEMGAYSTCLSTGFNGFHSDRETIYMSSDPAADIYL.

Position 82 is an N6-(pyridoxal phosphate)lysine (Lys82). Residues Ser213, Gly250, and 281–284 each bind pyridoxal 5'-phosphate; that span reads EPGR. 331 to 332 lines the substrate pocket; sequence FE. The Proton donor; shared with dimeric partner role is filled by Cys365. Asp366 provides a ligand contact to substrate. Tyr395 serves as a coordination point for pyridoxal 5'-phosphate.

The protein belongs to the Orn/Lys/Arg decarboxylase class-II family. In terms of assembly, homodimer. Only the dimer is catalytically active, as the active sites are constructed of residues from both monomers. Requires pyridoxal 5'-phosphate as cofactor.

It localises to the cytoplasm. The enzyme catalyses N(6),N(6)-dimethyl-L-lysine + H(+) = N,N-dimethyl-cadaverine + CO2. It participates in secondary metabolite biosynthesis; terpenoid biosynthesis. Its function is as follows. Decarboxylase; part of the gene cluster that mediates the biosynthesis of flavunoidine, an alkaloidal terpenoid with a tetracyclic cage-like core connected to dimethylcadaverine via a C-N bond and acylated with 5,5-dimethyl-L-pipecolate. The tetracyclic core is synthesized by the terpene cyclase flvE and the cytochrome P450 monooxygenase flvD. The terpene cyclase flvE catalyzes the cyclization of farnesyl pyrophosphate (FPP) to form (1R,4R,5S)-(+)-acoradiene and the cytochrome P450 monooxygenase flvD is then responsible for oxidative conversion of (1R,4R,5S)-(+)-acoradiene into the tetracyclic cage present in the final product flavunoidine. In parallel, the N-methyltransferase flvH dimethylates L-lysine to give N,N-dimethyl-L-Lysin which is decarboxylated by flvG to afford dimethylcadaverine. The terpene cyclase-like protein flvF is the enzyme that attaches the dimethylcadaverine precusor at the C-7 of the tetracyclic cage to yield pre-flavunoidine. The cytochrome monooxygenase flvC hydroxylates the C-10 position of pre-flavunoidine whereas the NRPS flvI acylates the terpenoid core at the hydroxylated C-10 with dimethylpipecolate to yield final flavunoidine. The bifunctional enzyme flvA and the dehydrogenase flvB are responsible for the synthesis of the dimethylpipecolate precursor. The PLP-dependent lyase domain of flvA might use L-O-acetyl-homoserine and alpha-keto-isovalerate to form an intermediary ketone that can cyclize intramolecularly to yield an imine. The imine can be reduced by flvB to yield the 6-carboxylated pipecolate. The C-terminal alpha-KG-dependent oxygenase domain of flvA is then proposed to catalyze the decarboxylation to yield dimethylpipecolate. This chain is Decarboxylase flvG, found in Aspergillus flavus (strain ATCC 200026 / FGSC A1120 / IAM 13836 / NRRL 3357 / JCM 12722 / SRRC 167).